A 299-amino-acid chain; its full sequence is Taste receptor type 2 member 1 (299 aa).

Residues 1 to 9 (MLESHLIIY) lie on the Extracellular side of the membrane. A helical transmembrane segment spans residues 10–30 (FLLAVIQFLLGIFTNGIIVVV). Topologically, residues 31-55 (NGIDLIKHRKMAPLDLLLSCLAVSR) are cytoplasmic. A helical transmembrane segment spans residues 56–76 (IFLQLFIFYVNVIVIFFIEFI). The Extracellular segment spans residues 77–81 (MCSAN). A helical membrane pass occupies residues 82–102 (CAILLFVNELELWLATWLGVF). The Cytoplasmic portion of the chain corresponds to 103–124 (YCAKVASVRHPLFIWLKMRISK). A helical membrane pass occupies residues 125–145 (LVPWMILGSLLYVSMICVFHS). Residues 146 to 178 (KYAGFMVPHFLRNFFSQNATIQKEDTLAIQIFS) are Extracellular-facing. A glycan (N-linked (GlcNAc...) asparagine) is linked at N163. A helical membrane pass occupies residues 179 to 199 (FVAEFSVPLLIFLVAVLLLIF). Over 200-222 (SLGRHTRQMRNTVAGSRVPGRGA) the chain is Cytoplasmic. The helical transmembrane segment at 223–243 (PISALLSILSFLILYFSHCMI) threads the bilayer. Residues 244-257 (KVFLSSLKFHVRRF) lie on the Extracellular side of the membrane. A helical transmembrane segment spans residues 258–278 (IFLFFILVIGIYPSGHSLILI). Over 279-299 (LGNPKLKQNAKKFLLHSKCCQ) the chain is Cytoplasmic.

This sequence belongs to the G-protein coupled receptor T2R family.

Its subcellular location is the membrane. Functionally, receptor that may play a role in the perception of bitterness and is gustducin-linked. May play a role in sensing the chemical composition of the gastrointestinal content. The activity of this receptor may stimulate alpha gustducin, mediate PLC-beta-2 activation and lead to the gating of TRPM5. The chain is Taste receptor type 2 member 1 (TAS2R1) from Pan paniscus (Pygmy chimpanzee).